The sequence spans 475 residues: Aspartyl/glutamyl-tRNA(Asn/Gln) amidotransferase subunit B (475 aa).

It belongs to the GatB/GatE family. GatB subfamily. As to quaternary structure, heterotrimer of A, B and C subunits.

The enzyme catalyses L-glutamyl-tRNA(Gln) + L-glutamine + ATP + H2O = L-glutaminyl-tRNA(Gln) + L-glutamate + ADP + phosphate + H(+). The catalysed reaction is L-aspartyl-tRNA(Asn) + L-glutamine + ATP + H2O = L-asparaginyl-tRNA(Asn) + L-glutamate + ADP + phosphate + 2 H(+). Allows the formation of correctly charged Asn-tRNA(Asn) or Gln-tRNA(Gln) through the transamidation of misacylated Asp-tRNA(Asn) or Glu-tRNA(Gln) in organisms which lack either or both of asparaginyl-tRNA or glutaminyl-tRNA synthetases. The reaction takes place in the presence of glutamine and ATP through an activated phospho-Asp-tRNA(Asn) or phospho-Glu-tRNA(Gln). The polypeptide is Aspartyl/glutamyl-tRNA(Asn/Gln) amidotransferase subunit B (Bacillus cereus (strain ATCC 10987 / NRS 248)).